Consider the following 250-residue polypeptide: HLA class II histocompatibility antigen, DO alpha chain (250 aa).

Positions 1-25 (MALRAGLVLGFHTLMTLLSPQEAGA) are cleaved as a signal peptide. The alpha-1 stretch occupies residues 26-110 (TKADHMGSYG…ERSNRSRAIN (85 aa)). The Extracellular portion of the chain corresponds to 26–217 (TKADHMGSYG…VPIPPPDAME (192 aa)). N-linked (GlcNAc...) asparagine glycans are attached at residues Asn-104 and Asn-144. Positions 111–204 (VPPRVTVLPK…GLDAPLLRHW (94 aa)) are alpha-2. One can recognise an Ig-like C1-type domain in the interval 113–205 (PRVTVLPKSR…LDAPLLRHWE (93 aa)). Cys-133 and Cys-189 form a disulfide bridge. Positions 205-217 (ELQVPIPPPDAME) are connecting peptide. Residues 218 to 240 (TLVCALGLAIGLVGFLVGTVLII) form a helical membrane-spanning segment. Over 241–250 (MGTYVSSVPR) the chain is Cytoplasmic.

The protein belongs to the MHC class II family. Heterodimer of an alpha chain (DOA) and a beta chain (DOB). Forms a heterotetrameric complex with an HLA-DM molecule during intracellular transport in endosomal/lysosomal compartments in B-cells.

The protein resides in the endosome membrane. The protein localises to the lysosome membrane. Important modulator in the HLA class II restricted antigen presentation pathway by interaction with the HLA-DM molecule in B-cells. Modifies peptide exchange activity of HLA-DM. This Homo sapiens (Human) protein is HLA class II histocompatibility antigen, DO alpha chain (HLA-DOA).